The chain runs to 449 residues: Phosphoglucosamine mutase (449 aa).

Ser101 serves as the catalytic Phosphoserine intermediate. Mg(2+)-binding residues include Ser101, Asp241, Asp243, and Asp245. Residue Ser101 is modified to Phosphoserine.

This sequence belongs to the phosphohexose mutase family. The cofactor is Mg(2+). Activated by phosphorylation.

The catalysed reaction is alpha-D-glucosamine 1-phosphate = D-glucosamine 6-phosphate. Catalyzes the conversion of glucosamine-6-phosphate to glucosamine-1-phosphate. This is Phosphoglucosamine mutase from Alkaliphilus oremlandii (strain OhILAs) (Clostridium oremlandii (strain OhILAs)).